The chain runs to 467 residues: MAIFLIIFVVFFGFCILSTPLFRWIDIVYNKKNLPPGTMGWPIFGETREFLNQGPNFMKNQRARYGNFFKSHILGCPTVVSMDAGLNVYILNNEAKGLIPGYPQSMLDILGKCNIAAVHGATHKYIRGALLSLINPTMIKDHILPKIDKFMRSHLSGWDNCNVIDIQQMTKEMAFFSSLDQIGGFATSSSIAQEFRAGFLNIALGTISLPINFPTTNYYRGLQGRKTIVKLLRKIIEDRRGSKKIQQDMLGLMMNEEAKNRYTLSDEELIDQIITIMYSGFETVSTTSMMAVKYLHDHPKALEEIRKEHFAIREKKSLEDPIDYNDFKAMRFTRAVIYETLRLATIVNGVLRKTTQDMELNGYMIPKGWRIYVYTRELNYDPLIYPDPYTFNPWRWLENNLDHQSSFLMFGGGTRLCPGKELGVAEISTFLHYFVTRYRWEEVGGNKLMKFPRVEALNGLWIKVSAY.

The helical transmembrane segment at 2–22 (AIFLIIFVVFFGFCILSTPLF) threads the bilayer. Residue cysteine 417 coordinates heme.

Belongs to the cytochrome P450 family. Requires heme as cofactor. As to expression, expressed in fruits.

The protein resides in the membrane. It catalyses the reaction 6-deoxocastasterone + reduced [NADPH--hemoprotein reductase] + O2 = 6alpha-hydroxycastasterone + oxidized [NADPH--hemoprotein reductase] + H2O + H(+). The enzyme catalyses 6alpha-hydroxycastasterone + reduced [NADPH--hemoprotein reductase] + O2 = castasterone + oxidized [NADPH--hemoprotein reductase] + 2 H2O + H(+). The catalysed reaction is castasterone + reduced [NADPH--hemoprotein reductase] + O2 = brassinolide + oxidized [NADPH--hemoprotein reductase] + H2O + H(+). It carries out the reaction 6-deoxocastasterone + 2 reduced [NADPH--hemoprotein reductase] + 2 O2 = castasterone + 2 oxidized [NADPH--hemoprotein reductase] + 3 H2O + 2 H(+). It participates in plant hormone biosynthesis; brassinosteroid biosynthesis. Functionally, catalyzes the C6-oxidation step in brassinosteroids biosynthesis. Converts 6-deoxocastasterone (6-deoxoCS) to castasterone (CS), and castasterone (CS) to brassinolide (BL). The chain is Cytochrome P450 85A3 from Solanum lycopersicum (Tomato).